Here is a 296-residue protein sequence, read N- to C-terminus: NADH-cytochrome b5 reductase 2 (296 aa).

Residues 2–24 (LVALAAIGVTVLLFLIKALGSGA) form a helical membrane-spanning segment. Residues 35–147 (NAKYPLPLIE…RGPNGLLVYK (113 aa)) form the FAD-binding FR-type domain. Residues 127–142 (DSLKIGETIDFRGPNG) and 166–201 (VAKHVGMLAGGTGITPMLQLIRQITQDPNDNTKCYL) contribute to the FAD site.

The protein belongs to the flavoprotein pyridine nucleotide cytochrome reductase family. Requires FAD as cofactor.

Its subcellular location is the membrane. The catalysed reaction is 2 Fe(III)-[cytochrome b5] + NADH = 2 Fe(II)-[cytochrome b5] + NAD(+) + H(+). NADH-cytochrome b5 reductases are involved in desaturation and elongation of fatty acids, cholesterol biosynthesis and drug metabolism. This chain is NADH-cytochrome b5 reductase 2 (cyb5r2), found in Xenopus laevis (African clawed frog).